Reading from the N-terminus, the 261-residue chain is Zinc import ATP-binding protein ZnuC (261 aa).

The ABC transporter domain maps to 6-227 (IQLNNIHLRF…PEYLKLFGKQ (222 aa)). 38-45 (GPNGAGKS) serves as a coordination point for ATP.

The protein belongs to the ABC transporter superfamily. Zinc importer (TC 3.A.1.15.5) family. The complex is composed of two ATP-binding proteins (ZnuC), two transmembrane proteins (ZnuB) and a solute-binding protein (ZnuA).

It is found in the cell inner membrane. The enzyme catalyses Zn(2+)(out) + ATP(in) + H2O(in) = Zn(2+)(in) + ADP(in) + phosphate(in) + H(+)(in). Part of the ABC transporter complex ZnuABC involved in zinc import. Responsible for energy coupling to the transport system. The sequence is that of Zinc import ATP-binding protein ZnuC from Saccharophagus degradans (strain 2-40 / ATCC 43961 / DSM 17024).